The primary structure comprises 138 residues: U1 small nuclear ribonucleoprotein C (138 aa).

The segment at 4-36 (YYCDYCDTFLTHDSPSVRKTHNNGRKHKENVRF) adopts a Matrin-type zinc-finger fold. The interval 58 to 138 (QSKPNSQMPP…MGRPPMSLRS (81 aa)) is disordered. Residues 67-109 (PNAPPGLMPPPGMLPPPGGMPPGRMPPQGLPFPPPGPIPPPPG) show a composition bias toward pro residues. The segment covering 113–138 (MRPPHGQMHMGGPRPQMGRPPMSLRS) has biased composition (low complexity).

This sequence belongs to the U1 small nuclear ribonucleoprotein C family. As to quaternary structure, U1 snRNP is composed of the 7 core Sm proteins B/B', D1, D2, D3, E, F and G that assemble in a heptameric protein ring on the Sm site of the small nuclear RNA to form the core snRNP, and at least 3 U1 snRNP-specific proteins U1-70K, U1-A and U1-C. U1-C interacts with U1 snRNA and the 5' splice-site region of the pre-mRNA.

The protein resides in the nucleus. Functionally, component of the spliceosomal U1 snRNP, which is essential for recognition of the pre-mRNA 5' splice-site and the subsequent assembly of the spliceosome. U1-C is directly involved in initial 5' splice-site recognition for both constitutive and regulated alternative splicing. The interaction with the 5' splice-site seems to precede base-pairing between the pre-mRNA and the U1 snRNA. Stimulates commitment or early (E) complex formation by stabilizing the base pairing of the 5' end of the U1 snRNA and the 5' splice-site region. In Nematostella vectensis (Starlet sea anemone), this protein is U1 small nuclear ribonucleoprotein C.